Here is a 338-residue protein sequence, read N- to C-terminus: D-xylulose reductase (338 aa).

3 residues coordinate Zn(2+): Cys-40, His-65, and Glu-151.

The protein belongs to the zinc-containing alcohol dehydrogenase family. In terms of assembly, homotetramer. Zn(2+) is required as a cofactor.

The enzyme catalyses xylitol + NAD(+) = D-xylulose + NADH + H(+). This chain is D-xylulose reductase, found in Morganella morganii (Proteus morganii).